We begin with the raw amino-acid sequence, 359 residues long: 3-dehydroquinate synthase (359 aa).

Residues 106-110, 130-131, lysine 143, and lysine 152 each bind NAD(+); these read GVVGD and TS. Zn(2+) is bound by residues glutamate 185, histidine 246, and histidine 262.

Belongs to the sugar phosphate cyclases superfamily. Dehydroquinate synthase family. It depends on NAD(+) as a cofactor. Co(2+) serves as cofactor. Requires Zn(2+) as cofactor.

The protein localises to the cytoplasm. The catalysed reaction is 7-phospho-2-dehydro-3-deoxy-D-arabino-heptonate = 3-dehydroquinate + phosphate. Its pathway is metabolic intermediate biosynthesis; chorismate biosynthesis; chorismate from D-erythrose 4-phosphate and phosphoenolpyruvate: step 2/7. Catalyzes the conversion of 3-deoxy-D-arabino-heptulosonate 7-phosphate (DAHP) to dehydroquinate (DHQ). The polypeptide is 3-dehydroquinate synthase (Lactiplantibacillus plantarum (strain ATCC BAA-793 / NCIMB 8826 / WCFS1) (Lactobacillus plantarum)).